The chain runs to 208 residues: Large ribosomal subunit protein bL25 (208 aa).

Positions 178–208 (LPPQQSEVPEPDSEEEPKEPEAIKEKDNDGE) are disordered. Positions 186–195 (PEPDSEEEPK) are enriched in acidic residues. Residues 196-208 (EPEAIKEKDNDGE) show a composition bias toward basic and acidic residues.

It belongs to the bacterial ribosomal protein bL25 family. CTC subfamily. Part of the 50S ribosomal subunit; part of the 5S rRNA/L5/L18/L25 subcomplex. Contacts the 5S rRNA. Binds to the 5S rRNA independently of L5 and L18.

In terms of biological role, this is one of the proteins that binds to the 5S RNA in the ribosome where it forms part of the central protuberance. The chain is Large ribosomal subunit protein bL25 from Bacillus pumilus (strain SAFR-032).